We begin with the raw amino-acid sequence, 184 residues long: MKNVTDSFVSLVNWPSAGSFGFNTDILATNPINLSVVLGVLIFFGKGVLSDLLDNRKQRILSTIRNSEELRVGAIEQLEKARARLRKVEMEADEFRVNGYSEIEREKLNLINSTYKNLERLENYKNETIHFEQQRAINQVRQRVFQQALQGALGTLNSCLNNELHLRTISANIGMFGAMKEITD.

A helical membrane pass occupies residues 27–49 (LATNPINLSVVLGVLIFFGKGVL).

The protein belongs to the ATPase B chain family. As to quaternary structure, F-type ATPases have 2 components, F(1) - the catalytic core - and F(0) - the membrane proton channel. F(1) has five subunits: alpha(3), beta(3), gamma(1), delta(1), epsilon(1). F(0) has four main subunits: a(1), b(1), b'(1) and c(10-14). The alpha and beta chains form an alternating ring which encloses part of the gamma chain. F(1) is attached to F(0) by a central stalk formed by the gamma and epsilon chains, while a peripheral stalk is formed by the delta, b and b' chains.

The protein localises to the plastid. It is found in the chloroplast thylakoid membrane. Functionally, f(1)F(0) ATP synthase produces ATP from ADP in the presence of a proton or sodium gradient. F-type ATPases consist of two structural domains, F(1) containing the extramembraneous catalytic core and F(0) containing the membrane proton channel, linked together by a central stalk and a peripheral stalk. During catalysis, ATP synthesis in the catalytic domain of F(1) is coupled via a rotary mechanism of the central stalk subunits to proton translocation. Component of the F(0) channel, it forms part of the peripheral stalk, linking F(1) to F(0). The polypeptide is ATP synthase subunit b, chloroplastic (Buxus microphylla (Littleleaf boxwood)).